A 165-amino-acid polypeptide reads, in one-letter code: Acireductone dioxygenase (165 aa).

Residues His90, His92, Glu96, and His134 each coordinate Fe(2+). Residues His90, His92, Glu96, and His134 each contribute to the Ni(2+) site.

The protein belongs to the acireductone dioxygenase (ARD) family. Monomer. It depends on Fe(2+) as a cofactor. Ni(2+) is required as a cofactor.

The catalysed reaction is 1,2-dihydroxy-5-(methylsulfanyl)pent-1-en-3-one + O2 = 3-(methylsulfanyl)propanoate + CO + formate + 2 H(+). It catalyses the reaction 1,2-dihydroxy-5-(methylsulfanyl)pent-1-en-3-one + O2 = 4-methylsulfanyl-2-oxobutanoate + formate + 2 H(+). The protein operates within amino-acid biosynthesis; L-methionine biosynthesis via salvage pathway; L-methionine from S-methyl-5-thio-alpha-D-ribose 1-phosphate: step 5/6. Catalyzes 2 different reactions between oxygen and the acireductone 1,2-dihydroxy-3-keto-5-methylthiopentene (DHK-MTPene) depending upon the metal bound in the active site. Fe-containing acireductone dioxygenase (Fe-ARD) produces formate and 2-keto-4-methylthiobutyrate (KMTB), the alpha-ketoacid precursor of methionine in the methionine recycle pathway. Ni-containing acireductone dioxygenase (Ni-ARD) produces methylthiopropionate, carbon monoxide and formate, and does not lie on the methionine recycle pathway. The chain is Acireductone dioxygenase from Rhodopseudomonas palustris (strain ATCC BAA-98 / CGA009).